The primary structure comprises 156 residues: Ribonuclease pancreatic (156 aa).

Positions methionine 1–glycine 28 are cleaved as a signal peptide. Basic and acidic residues predominate over residues alanine 33–serine 43. Residues alanine 33–threonine 52 are disordered. Substrate-binding residues include lysine 35 and arginine 38. Histidine 40 (proton acceptor) is an active-site residue. N-linked (GlcNAc...) asparagine glycosylation is found at asparagine 50 and asparagine 62. Cystine bridges form between cysteine 54/cysteine 112, cysteine 68/cysteine 123, cysteine 86/cysteine 138, and cysteine 93/cysteine 100. Substrate is bound by residues lysine 69–threonine 73 and lysine 94. Asparagine 104 carries an N-linked (GlcNAc...) asparagine glycan. Arginine 113 lines the substrate pocket. Asparagine 116 is a glycosylation site (N-linked (GlcNAc...) asparagine). The active-site Proton donor is the histidine 147.

The protein belongs to the pancreatic ribonuclease family. Monomer. Interacts with and forms tight 1:1 complexes with RNH1. Dimerization of two such complexes may occur. Interaction with RNH1 inhibits this protein.

It is found in the secreted. The catalysed reaction is an [RNA] containing cytidine + H2O = an [RNA]-3'-cytidine-3'-phosphate + a 5'-hydroxy-ribonucleotide-3'-[RNA].. The enzyme catalyses an [RNA] containing uridine + H2O = an [RNA]-3'-uridine-3'-phosphate + a 5'-hydroxy-ribonucleotide-3'-[RNA].. Functionally, endonuclease that catalyzes the cleavage of RNA on the 3' side of pyrimidine nucleotides. Acts on single-stranded and double-stranded RNA. The protein is Ribonuclease pancreatic (RNASE1) of Gorilla gorilla gorilla (Western lowland gorilla).